We begin with the raw amino-acid sequence, 234 residues long: 2-C-methyl-D-erythritol 4-phosphate cytidylyltransferase (234 aa).

Belongs to the IspD/TarI cytidylyltransferase family. IspD subfamily.

It carries out the reaction 2-C-methyl-D-erythritol 4-phosphate + CTP + H(+) = 4-CDP-2-C-methyl-D-erythritol + diphosphate. Its pathway is isoprenoid biosynthesis; isopentenyl diphosphate biosynthesis via DXP pathway; isopentenyl diphosphate from 1-deoxy-D-xylulose 5-phosphate: step 2/6. In terms of biological role, catalyzes the formation of 4-diphosphocytidyl-2-C-methyl-D-erythritol from CTP and 2-C-methyl-D-erythritol 4-phosphate (MEP). The sequence is that of 2-C-methyl-D-erythritol 4-phosphate cytidylyltransferase from Shewanella sediminis (strain HAW-EB3).